A 377-amino-acid chain; its full sequence is tRNA pseudouridine synthase B (377 aa).

D53 (nucleophile) is an active-site residue.

The protein belongs to the pseudouridine synthase TruB family. Type 1 subfamily.

It carries out the reaction uridine(55) in tRNA = pseudouridine(55) in tRNA. Its function is as follows. Responsible for synthesis of pseudouridine from uracil-55 in the psi GC loop of transfer RNAs. In Tropheryma whipplei (strain Twist) (Whipple's bacillus), this protein is tRNA pseudouridine synthase B.